Here is a 339-residue protein sequence, read N- to C-terminus: Cyclin-Y-like protein 1 (339 aa).

Positions glutamine 181–asparagine 263 constitute a Cyclin N-terminal domain.

The protein belongs to the cyclin family. Cyclin Y subfamily.

The protein localises to the cell membrane. In terms of biological role, key regulator of Wnt signaling implicated in various biological processes such as embryonic neurogenesis. This chain is Cyclin-Y-like protein 1 (ccnyl1), found in Danio rerio (Zebrafish).